Reading from the N-terminus, the 426-residue chain is Isovaleryl-CoA dehydrogenase, mitochondrial (426 aa).

The transit peptide at 1–32 (MATAAWLLGRRVASWRMRPPLQSLAGLITQRT) directs the protein to the mitochondrion. Residues lysine 58 and lysine 78 each carry the N6-acetyllysine; alternate modification. An N6-succinyllysine; alternate mark is found at lysine 58 and lysine 78. FAD is bound by residues 165–174 (LAMSEPNAGS) and 198–200 (WIT). Serine 174 contacts substrate. A substrate-binding site is contributed by 222-223 (SR). Lysine 241 is modified (N6-acetyllysine). Substrate contacts are provided by residues tyrosine 277 and 284 to 287 (DLER). Glutamate 286 serves as the catalytic Proton acceptor. Arginine 312 serves as a coordination point for FAD. Position 318 is an N6-succinyllysine (lysine 318). FAD contacts are provided by residues glutamine 323 and 380–384 (QCLGG). 407 to 408 (AG) provides a ligand contact to substrate. Position 409–411 (409–411 (TSE)) interacts with FAD.

This sequence belongs to the acyl-CoA dehydrogenase family. As to quaternary structure, homotetramer. FAD serves as cofactor.

Its subcellular location is the mitochondrion matrix. It carries out the reaction 3-methylbutanoyl-CoA + oxidized [electron-transfer flavoprotein] + H(+) = 3-methylbut-2-enoyl-CoA + reduced [electron-transfer flavoprotein]. The enzyme catalyses pentanoyl-CoA + oxidized [electron-transfer flavoprotein] + H(+) = (2E)-pentenoyl-CoA + reduced [electron-transfer flavoprotein]. It catalyses the reaction hexanoyl-CoA + oxidized [electron-transfer flavoprotein] + H(+) = (2E)-hexenoyl-CoA + reduced [electron-transfer flavoprotein]. The catalysed reaction is butanoyl-CoA + oxidized [electron-transfer flavoprotein] + H(+) = (2E)-butenoyl-CoA + reduced [electron-transfer flavoprotein]. The protein operates within amino-acid degradation; L-leucine degradation; (S)-3-hydroxy-3-methylglutaryl-CoA from 3-isovaleryl-CoA: step 1/3. In terms of biological role, catalyzes the conversion of isovaleryl-CoA/3-methylbutanoyl-CoA to 3-methylbut-2-enoyl-CoA as an intermediate step in the leucine (Leu) catabolic pathway. To a lesser extent, is also able to catalyze the oxidation of other saturated short-chain acyl-CoA thioesters as pentanoyl-CoA, hexenoyl-CoA and butenoyl-CoA. The sequence is that of Isovaleryl-CoA dehydrogenase, mitochondrial (IVD) from Bos taurus (Bovine).